Consider the following 398-residue polypeptide: FK506-binding protein 4 (398 aa).

Disordered regions lie at residues 66–120, 164–232, and 245–288; these read EVDE…DEYE, VKHP…QLAK, and DLIA…KKNK. The segment covering 170 to 228 has biased composition (acidic residues); that stretch reads EPLEDLYSDEDSEEYSDDELDQEIEEDDELDHDEASSEESDEDQEFYDAISEGDEDIDE. The span at 264 to 287 shows a compositional bias: basic and acidic residues; that stretch reads PETKKSKKTKDEKNTKATENEKKN. The 87-residue stretch at 312–398 folds into the PPIase FKBP-type domain; that stretch reads GSKVGMRYIG…TFDVKLVSLK (87 aa).

It belongs to the FKBP-type PPIase family. FKBP3/4 subfamily. As to quaternary structure, binds to histones H3 and H4.

Its subcellular location is the nucleus. The enzyme catalyses [protein]-peptidylproline (omega=180) = [protein]-peptidylproline (omega=0). With respect to regulation, inhibited by both FK506 and rapamycin. Its function is as follows. PPIase that acts as a histone chaperone. Histone proline isomerase that increases the rate of cis-trans isomerization at prolines on the histone H3 N-terminal tail. Proline isomerization influences H3 methylation thereby regulating gene expression. The sequence is that of FK506-binding protein 4 (FPR4) from Candida glabrata (strain ATCC 2001 / BCRC 20586 / JCM 3761 / NBRC 0622 / NRRL Y-65 / CBS 138) (Yeast).